A 324-amino-acid polypeptide reads, in one-letter code: Beta-ketoacyl-[acyl-carrier-protein] synthase III (324 aa).

Active-site residues include Cys-112 and His-249. An ACP-binding region spans residues 250 to 254; that stretch reads QANRR. Asn-279 is a catalytic residue.

The protein belongs to the thiolase-like superfamily. FabH family. In terms of assembly, homodimer.

The protein localises to the cytoplasm. The catalysed reaction is malonyl-[ACP] + acetyl-CoA + H(+) = 3-oxobutanoyl-[ACP] + CO2 + CoA. It functions in the pathway lipid metabolism; fatty acid biosynthesis. Its function is as follows. Catalyzes the condensation reaction of fatty acid synthesis by the addition to an acyl acceptor of two carbons from malonyl-ACP. Catalyzes the first condensation reaction which initiates fatty acid synthesis and may therefore play a role in governing the total rate of fatty acid production. Possesses both acetoacetyl-ACP synthase and acetyl transacylase activities. Its substrate specificity determines the biosynthesis of branched-chain and/or straight-chain of fatty acids. The chain is Beta-ketoacyl-[acyl-carrier-protein] synthase III from Streptococcus pyogenes serotype M4 (strain MGAS10750).